A 254-amino-acid chain; its full sequence is Protein EFFECTOR OF TRANSCRIPTION 3 (254 aa).

The region spanning 103–152 is the GIY-YIG domain; that stretch reads RCTGLYELGVGVIGQDQGQNFDPDNNVLGVYVGQCVDVKSRLQDYGRRGG.

It is found in the cytoplasm. In Arabidopsis thaliana (Mouse-ear cress), this protein is Protein EFFECTOR OF TRANSCRIPTION 3.